Consider the following 228-residue polypeptide: Urease accessory protein UreF (228 aa).

This sequence belongs to the UreF family. In terms of assembly, ureD, UreF and UreG form a complex that acts as a GTP-hydrolysis-dependent molecular chaperone, activating the urease apoprotein by helping to assemble the nickel containing metallocenter of UreC. The UreE protein probably delivers the nickel.

The protein localises to the cytoplasm. Its function is as follows. Required for maturation of urease via the functional incorporation of the urease nickel metallocenter. The polypeptide is Urease accessory protein UreF (Prochlorococcus marinus subsp. pastoris (strain CCMP1986 / NIES-2087 / MED4)).